We begin with the raw amino-acid sequence, 1294 residues long: von Willebrand factor A domain-containing protein 3B (1294 aa).

Residues 508 to 684 (CIYILIDTSH…EDLTLLVKEM (177 aa)) enclose the VWFA domain. Disordered stretches follow at residues 732-754 (CAKP…KGPW), 778-803 (RSQM…SSRR), 1012-1036 (APGE…DPLK), and 1193-1247 (DTQD…PRTA). Polar residues predominate over residues 738 to 748 (DVDSTQTSSLN). A compositionally biased stretch (low complexity) spans 778-787 (RSQMSSLRSS). Over residues 1193–1202 (DTQDSREPRR) the composition is skewed to basic and acidic residues. A compositionally biased stretch (basic residues) spans 1203–1212 (EKPRRKKRPA). Residues 1213–1236 (KQPLQQAAPSDSDGSSHGISSHGS) are compositionally biased toward low complexity.

The protein localises to the cytoplasm. The chain is von Willebrand factor A domain-containing protein 3B (VWA3B) from Homo sapiens (Human).